The chain runs to 302 residues: N-acetyl-D-glucosamine kinase (302 aa).

Residues 4-11 and 133-139 each bind ATP; these read GFDIGGTK and GGGGLVL. Residues H156, C176, C178, and C183 each coordinate Zn(2+).

It belongs to the ROK (NagC/XylR) family. NagK subfamily.

It carries out the reaction N-acetyl-D-glucosamine + ATP = N-acetyl-D-glucosamine 6-phosphate + ADP + H(+). Its pathway is cell wall biogenesis; peptidoglycan recycling. Catalyzes the phosphorylation of N-acetyl-D-glucosamine (GlcNAc) derived from cell-wall degradation, yielding GlcNAc-6-P. This is N-acetyl-D-glucosamine kinase from Salmonella typhi.